The sequence spans 450 residues: Tubulin alpha chain (450 aa).

Q11 serves as a coordination point for GTP. Residue K40 is modified to N6-acetyllysine. E71, S140, G144, T145, T179, N206, and N228 together coordinate GTP. E71 contacts Mg(2+). The active site involves E254.

This sequence belongs to the tubulin family. Dimer of alpha and beta chains. A typical microtubule is a hollow water-filled tube with an outer diameter of 25 nm and an inner diameter of 15 nM. Alpha-beta heterodimers associate head-to-tail to form protofilaments running lengthwise along the microtubule wall with the beta-tubulin subunit facing the microtubule plus end conferring a structural polarity. Microtubules usually have 13 protofilaments but different protofilament numbers can be found in some organisms and specialized cells. It depends on Mg(2+) as a cofactor. In terms of processing, acetylation of alpha chains at Lys-40 stabilizes microtubules and affects affinity and processivity of microtubule motors. This modification has a role in multiple cellular functions, ranging from cell motility, cell cycle progression or cell differentiation to intracellular trafficking and signaling.

It is found in the cytoplasm. The protein localises to the cytoskeleton. The enzyme catalyses GTP + H2O = GDP + phosphate + H(+). In terms of biological role, tubulin is the major constituent of microtubules, a cylinder consisting of laterally associated linear protofilaments composed of alpha- and beta-tubulin heterodimers. Microtubules grow by the addition of GTP-tubulin dimers to the microtubule end, where a stabilizing cap forms. Below the cap, tubulin dimers are in GDP-bound state, owing to GTPase activity of alpha-tubulin. The protein is Tubulin alpha chain of Euplotoides octocarinatus (Freshwater ciliate).